The following is a 116-amino-acid chain: Large ribosomal subunit protein eL31 (116 aa).

Belongs to the eukaryotic ribosomal protein eL31 family.

This chain is Large ribosomal subunit protein eL31 (RPL31), found in Chlamydomonas reinhardtii (Chlamydomonas smithii).